Here is a 573-residue protein sequence, read N- to C-terminus: ATP-dependent RNA helicase RhlB (573 aa).

The Q motif signature appears at 9-37 (VTFSSFDLHPALIAGLESAGFTRCTPIQA). The Helicase ATP-binding domain maps to 40–220 (LPVALPGGDV…YEHMNEPEKL (181 aa)). ATP is bound at residue 53 to 60 (AQTGTGKT). A DEAD box motif is present at residues 166–169 (DEAD). The Helicase C-terminal domain maps to 231–393 (RVRQRIYFPS…PVTSELLTPL (163 aa)). Residues 391 to 560 (TPLPRAPRVP…KPSGSPSLLS (170 aa)) are disordered. The span at 402–411 (EGEEADDDAG) shows a compositional bias: acidic residues. A compositionally biased stretch (basic and acidic residues) spans 419-432 (REAREQRAAEEQRR). Residues 435-450 (GRSGSGGSRSGSGGGG) are compositionally biased toward gly residues. Residues 451–462 (GRREGAGADGKP) are compositionally biased toward basic and acidic residues. Over residues 484-499 (PVVAAAAGQAPSAGVA) the composition is skewed to low complexity. Residues 505-514 (PRKRRRRRNG) are compositionally biased toward basic residues. The span at 541–560 (VVAKPVRAAAKPSGSPSLLS) shows a compositional bias: low complexity.

The protein belongs to the DEAD box helicase family. RhlB subfamily. As to quaternary structure, component of the RNA degradosome, which is a multiprotein complex involved in RNA processing and mRNA degradation.

The protein resides in the cytoplasm. It catalyses the reaction ATP + H2O = ADP + phosphate + H(+). In terms of biological role, DEAD-box RNA helicase involved in RNA degradation. Has RNA-dependent ATPase activity and unwinds double-stranded RNA. The polypeptide is ATP-dependent RNA helicase RhlB (Xanthomonas euvesicatoria pv. vesicatoria (strain 85-10) (Xanthomonas campestris pv. vesicatoria)).